Reading from the N-terminus, the 296-residue chain is Homoserine kinase (296 aa).

ATP is bound at residue 92 to 102; sequence PQSRGLGSSAA.

Belongs to the GHMP kinase family. Homoserine kinase subfamily.

The protein localises to the cytoplasm. The enzyme catalyses L-homoserine + ATP = O-phospho-L-homoserine + ADP + H(+). Its pathway is amino-acid biosynthesis; L-threonine biosynthesis; L-threonine from L-aspartate: step 4/5. Catalyzes the ATP-dependent phosphorylation of L-homoserine to L-homoserine phosphate. The polypeptide is Homoserine kinase (Cutibacterium acnes (strain DSM 16379 / KPA171202) (Propionibacterium acnes)).